Reading from the N-terminus, the 122-residue chain is MNKIIKFHNERIKWLWILTAILAISFFVICFNNVKWIYTENTAKYELLTSSLEKIVKFYSFSLVDKPFARGVPNSIDVFSRAIIGVAFGLGFVGTMLIDYFIISKVAYIVKQKIKQSKKVGM.

2 helical membrane-spanning segments follow: residues 14 to 34 and 83 to 103; these read WLWILTAILAISFFVICFNNV and IIGVAFGLGFVGTMLIDYFII.

The protein localises to the cell membrane. This is an uncharacterized protein from Ureaplasma parvum serovar 3 (strain ATCC 700970).